Here is a 123-residue protein sequence, read N- to C-terminus: Prostate stem cell antigen (123 aa).

A signal peptide spans 1-20; that stretch reads MKTVFFLLLATYLALHPGAA. The 75-residue stretch at 21–95 folds into the UPAR/Ly6 domain; that stretch reads LQCYSCTAQM…CCYSDLCNVN (75 aa). Intrachain disulfides connect Cys23–Cys48, Cys26–Cys35, Cys41–Cys66, Cys70–Cys86, and Cys87–Cys92. Residue Asn40 is glycosylated (N-linked (GlcNAc...) asparagine). A lipid anchor (GPI-anchor amidated asparagine) is attached at Asn95. Positions 96–123 are cleaved as a propeptide — removed in mature form; sequence GAHTLKPPTTLGLLTVLCSLLLWGSSRL.

As to quaternary structure, interacts with CHRNA4. Predominantly expressed in prostate. Also found in spleen, liver, lung, prostate, kidney and testis. Expressed in brain cortex; expression is increased in transgenic mouse model of Alzheimer disease (at protein level).

Its subcellular location is the cell membrane. In terms of biological role, may be involved in the regulation of cell proliferation. Its function is as follows. May act as a modulator of nicotinic acetylcholine receptors (nAChRs) activity. In vitro inhibits nicotine-induced signaling probably implicating alpha-3:beta-2- or alpha-7-containing nAChRs. The polypeptide is Prostate stem cell antigen (Psca) (Mus musculus (Mouse)).